Reading from the N-terminus, the 134-residue chain is L-ectoine synthase (134 aa).

The protein belongs to the ectoine synthase family.

It carries out the reaction (2S)-4-acetamido-2-aminobutanoate = L-ectoine + H2O. It functions in the pathway amine and polyamine biosynthesis; ectoine biosynthesis; L-ectoine from L-aspartate 4-semialdehyde: step 3/3. Functionally, catalyzes the circularization of gamma-N-acetyl-alpha,gamma-diaminobutyric acid (ADABA) to ectoine (1,4,5,6-tetrahydro-2-methyl-4-pyrimidine carboxylic acid), which is an excellent osmoprotectant. The polypeptide is L-ectoine synthase (Shouchella clausii (strain KSM-K16) (Alkalihalobacillus clausii)).